A 320-amino-acid polypeptide reads, in one-letter code: Delta-aminolevulinic acid dehydratase (320 aa).

Zn(2+) contacts are provided by C119, C121, and C129. The active-site Schiff-base intermediate with substrate is the K194. 5-aminolevulinate contacts are provided by R204 and R216. Residue E232 participates in Mg(2+) binding. The Schiff-base intermediate with substrate role is filled by K247. S273 provides a ligand contact to 5-aminolevulinate.

Belongs to the ALAD family. In terms of assembly, homooctamer. Zn(2+) serves as cofactor.

It carries out the reaction 2 5-aminolevulinate = porphobilinogen + 2 H2O + H(+). It participates in porphyrin-containing compound metabolism; protoporphyrin-IX biosynthesis; coproporphyrinogen-III from 5-aminolevulinate: step 1/4. Its function is as follows. Catalyzes an early step in the biosynthesis of tetrapyrroles. Binds two molecules of 5-aminolevulinate per subunit, each at a distinct site, and catalyzes their condensation to form porphobilinogen. This chain is Delta-aminolevulinic acid dehydratase (hemB), found in Methanothermus sociabilis.